The following is a 246-amino-acid chain: Chlorophyll a-b binding protein 6A, chloroplastic (246 aa).

The N-terminal 45 residues, 1-45, are a transit peptide targeting the chloroplast; sequence MASNTLMSCGIPAVCPSFLSSTKSKFAAAMPVYVGATNFMSRFSM. A chlorophyll b-binding site is contributed by Trp49. The chlorophyll a site is built by Phe69, Glu88, and His91. Position 93 (Arg93) interacts with chlorophyll b. The chain crosses the membrane as a helical span at residues 94 to 114; the sequence is WAMLAVPGIIVPEALGLGNWV. Leu130 contributes to the chlorophyll a binding site. A helical membrane pass occupies residues 133 to 153; it reads PVPWGTLPTILAIEFLAIAFV. Residues Val134, Glu154, and Arg157 each coordinate chlorophyll b. Chlorophyll a contacts are provided by Lys191, Glu192, Asn195, Arg197, Gln209, and His225.

The protein belongs to the light-harvesting chlorophyll a/b-binding (LHC) protein family. As to quaternary structure, the LHC complex consists of chlorophyll a-b binding proteins. The cofactor is Binds at least 14 chlorophylls (8 Chl-a and 6 Chl-b) and carotenoids such as lutein and neoxanthin.. In terms of processing, photoregulated by reversible phosphorylation of its threonine residues.

It localises to the plastid. The protein resides in the chloroplast thylakoid membrane. The light-harvesting complex (LHC) functions as a light receptor, it captures and delivers excitation energy to photosystems with which it is closely associated. The protein is Chlorophyll a-b binding protein 6A, chloroplastic (CAB6A) of Solanum lycopersicum (Tomato).